Here is a 634-residue protein sequence, read N- to C-terminus: DNA-directed RNA polymerase subunit gamma (634 aa).

The Zn(2+) site is built by C74, C76, C89, and C92. The Mg(2+) site is built by D471, D473, and D475.

This sequence belongs to the RNA polymerase beta' chain family. RpoC1 subfamily. As to quaternary structure, in cyanobacteria the RNAP catalytic core is composed of 2 alpha, 1 beta, 1 beta', 1 gamma and 1 omega subunit. When a sigma factor is associated with the core the holoenzyme is formed, which can initiate transcription. Mg(2+) serves as cofactor. The cofactor is Zn(2+).

The catalysed reaction is RNA(n) + a ribonucleoside 5'-triphosphate = RNA(n+1) + diphosphate. DNA-dependent RNA polymerase catalyzes the transcription of DNA into RNA using the four ribonucleoside triphosphates as substrates. This is DNA-directed RNA polymerase subunit gamma from Synechococcus sp. (strain CC9605).